A 98-amino-acid chain; its full sequence is Large ribosomal subunit protein bL25 (98 aa).

Positions 1–23 (MANFVLNAQARAEDKQGKGASRR) are disordered.

The protein belongs to the bacterial ribosomal protein bL25 family. In terms of assembly, part of the 50S ribosomal subunit; part of the 5S rRNA/L5/L18/L25 subcomplex. Contacts the 5S rRNA. Binds to the 5S rRNA independently of L5 and L18.

In terms of biological role, this is one of the proteins that binds to the 5S RNA in the ribosome where it forms part of the central protuberance. The protein is Large ribosomal subunit protein bL25 of Acinetobacter baumannii (strain ATCC 17978 / DSM 105126 / CIP 53.77 / LMG 1025 / NCDC KC755 / 5377).